The following is a 245-amino-acid chain: NLP effector protein Pc118551 (245 aa).

Residues 1 to 19 (MNLRAFLLSAVAALVAVQA) form the signal peptide. A Hepta-peptide GHRHDWE motif motif is present at residues 121–127 (QRRHLWE). Residue Asn-140 is glycosylated (N-linked (GlcNAc...) asparagine).

This sequence belongs to the Necrosis inducing protein (NPP1) family.

It localises to the secreted. Secreted effector that contributes strongly to virulence during infection by P.capsici. This is NLP effector protein Pc118551 from Phytophthora capsici.